Reading from the N-terminus, the 524-residue chain is Alkaline phosphatase, tissue-nonspecific isozyme (524 aa).

The first 17 residues, Met1–Ser17, serve as a signal peptide directing secretion. Residue Asp60 coordinates Mg(2+). Zn(2+) is bound by residues Asp60 and Ser110. Ser110 acts as the Phosphoserine intermediate in catalysis. Phosphoserine is present on Ser110. A disulfide bond links Cys139 and Cys201. N-linked (GlcNAc...) asparagine glycosylation occurs at Asn140. Thr173 is a Mg(2+) binding site. Asn230 carries an N-linked (GlcNAc...) asparagine glycan. Glu235 provides a ligand contact to Ca(2+). The N-linked (GlcNAc...) asparagine glycan is linked to Asn271. Phe290 and Glu291 together coordinate Ca(2+). Asn303 is a glycosylation site (N-linked (GlcNAc...) asparagine). Asp306 provides a ligand contact to Ca(2+). Glu332 serves as a coordination point for Mg(2+). The Zn(2+) site is built by Asp337, His341, Asp378, and His379. Asn430 is a glycosylation site (N-linked (GlcNAc...) asparagine). His454 is a binding site for Zn(2+). Cys489 and Cys497 are joined by a disulfide. Ser499 carries GPI-anchor amidated serine lipidation. Positions Ala500 to Phe524 are cleaved as a propeptide — removed in mature form.

It belongs to the alkaline phosphatase family. In terms of assembly, homodimer. It depends on Mg(2+) as a cofactor. Zn(2+) serves as cofactor. Requires Ca(2+) as cofactor. In terms of processing, N-glycosylated.

The protein resides in the cell membrane. It localises to the extracellular vesicle membrane. The protein localises to the mitochondrion membrane. It is found in the mitochondrion intermembrane space. It carries out the reaction a phosphate monoester + H2O = an alcohol + phosphate. The enzyme catalyses diphosphate + H2O = 2 phosphate + H(+). It catalyses the reaction pyridoxal 5'-phosphate + H2O = pyridoxal + phosphate. The catalysed reaction is phosphoethanolamine + H2O = ethanolamine + phosphate. It carries out the reaction N-phosphocreatine + H2O = creatine + phosphate. The enzyme catalyses ATP + H2O = ADP + phosphate + H(+). It catalyses the reaction ADP + H2O = AMP + phosphate + H(+). The catalysed reaction is AMP + H2O = adenosine + phosphate. Phosphatase activity is specifically inhibited by 5-((5-chloro-2-methoxyphenyl)sulfonamido)nicotinamide (SBI-425). Alkaline phosphatase that metabolizes various phosphate compounds and plays a key role in skeletal mineralization and adaptive thermogenesis. Has broad substrate specificity and can hydrolyze a considerable variety of compounds: however, only a few substrates, such as diphosphate (inorganic pyrophosphate; PPi), pyridoxal 5'-phosphate (PLP) and N-phosphocreatine are natural substrates. Plays an essential role in skeletal and dental mineralization via its ability to hydrolyze extracellular diphosphate, a potent mineralization inhibitor, to phosphate: it thereby promotes hydroxyapatite crystal formation and increases inorganic phosphate concentration. Acts in a non-redundant manner with PHOSPHO1 in skeletal mineralization: while PHOSPHO1 mediates the initiation of hydroxyapatite crystallization in the matrix vesicles (MVs), ALPL/TNAP catalyzes the spread of hydroxyapatite crystallization in the extracellular matrix. Also promotes dephosphorylation of osteopontin (SSP1), an inhibitor of hydroxyapatite crystallization in its phosphorylated state; it is however unclear whether ALPL/TNAP mediates SSP1 dephosphorylation via a direct or indirect manner. Catalyzes dephosphorylation of PLP to pyridoxal (PL), the transportable form of vitamin B6, in order to provide a sufficient amount of PLP in the brain, an essential cofactor for enzymes catalyzing the synthesis of diverse neurotransmitters. Additionally, also able to mediate ATP degradation in a stepwise manner to adenosine, thereby regulating the availability of ligands for purinergic receptors. Also capable of dephosphorylating microbial products, such as lipopolysaccharides (LPS) as well as other phosphorylated small-molecules, such as poly-inosine:cytosine (poly I:C). Acts as a key regulator of adaptive thermogenesis as part of the futile creatine cycle: localizes to the mitochondria of thermogenic fat cells and acts by mediating hydrolysis of N-phosphocreatine to initiate a futile cycle of creatine dephosphorylation and phosphorylation. During the futile creatine cycle, creatine and N-phosphocreatine are in a futile cycle, which dissipates the high energy charge of N-phosphocreatine as heat without performing any mechanical or chemical work. This Bos taurus (Bovine) protein is Alkaline phosphatase, tissue-nonspecific isozyme (ALPL).